Consider the following 1409-residue polypeptide: MAP kinase-activating death domain protein (1409 aa).

The uDENN domain maps to 26-230; it reads RGASQSSPDA…VPVPGKTKVQ (205 aa). One can recognise a cDENN domain in the interval 251–390; it reads RFTLIDFPLH…DATHLKERLK (140 aa). The dDENN domain maps to 392 to 496; it reads AINKMTTMTV…ECCLCPKNET (105 aa). Disordered stretches follow at residues 654-701, 761-784, 902-1008, and 1015-1034; these read SFDH…MKGL, QHIVRSKTQPNPTSQQTANQQSKN, SSSA…KVKT, and PQNLVPNNQPAQPSSPSFLA. 2 stretches are compositionally biased toward polar residues: residues 680 to 691 and 761 to 772; these read SDASDTPTSRGS and QHIVRSKTQPNP. Low complexity-rich tracts occupy residues 773-784 and 902-913; these read TSQQTANQQSKN and SSSAPSTMTTPS. Positions 915–925 are enriched in basic and acidic residues; sequence HSNDILKESRP. The span at 941–961 shows a compositional bias: polar residues; it reads LGQNVTPTSTNNHEIAQSTRS. The span at 963–1003 shows a compositional bias: pro residues; sequence ALPPPVPPREAPPIPKRNPPPLGAPPKVPEGARAPPPLPPR. Residues 1020 to 1031 are compositionally biased toward low complexity; that stretch reads PNNQPAQPSSPS. Positions 1109–1184 constitute a Death domain; that stretch reads GMDQEPSEMI…GLVCSKEINK (76 aa).

Belongs to the MADD family. In terms of assembly, interacts with cab-1. In terms of tissue distribution, expressed in nearly all neurons.

The protein localises to the cell membrane. It localises to the cytoplasm. Its function is as follows. Guanyl-nucleotide exchange factor that regulates small GTPases. Converts GDP-bound inactive form of rab-3 and cab-1 to the GTP-bound active forms. Regulator of presynaptic activity that interacts with rab-3 to regulate synaptic vesicle release. Is also a regulator of the cab-1 synaptic transmission pathway. Probably by converting rab-3 to its GTP-bound active form, plays a role in the recruitment of endophilin unc-57 to synaptic vesicles. Probably by activating rab-3 and thus regulating the trafficking of dense-core vesicles, plays a role in AVG neuron-mediated formation of the right axon tract of the ventral nerve cord. Regulates anterior body muscle contractions (aBOC) and the expulsion steps during the defecation motor program (DMP). Probably by regulating DMP, required for fatty acid uptake by intestinal cells. The polypeptide is MAP kinase-activating death domain protein (aex-3) (Caenorhabditis elegans).